We begin with the raw amino-acid sequence, 319 residues long: Aspartate carbamoyltransferase catalytic subunit (319 aa).

Arginine 57 and threonine 58 together coordinate carbamoyl phosphate. Lysine 85 contributes to the L-aspartate binding site. Arginine 107, histidine 140, and glutamine 143 together coordinate carbamoyl phosphate. Positions 173 and 227 each coordinate L-aspartate. Residues glycine 268 and proline 269 each coordinate carbamoyl phosphate.

Belongs to the aspartate/ornithine carbamoyltransferase superfamily. ATCase family. Heterododecamer (2C3:3R2) of six catalytic PyrB chains organized as two trimers (C3), and six regulatory PyrI chains organized as three dimers (R2).

The catalysed reaction is carbamoyl phosphate + L-aspartate = N-carbamoyl-L-aspartate + phosphate + H(+). The protein operates within pyrimidine metabolism; UMP biosynthesis via de novo pathway; (S)-dihydroorotate from bicarbonate: step 2/3. Functionally, catalyzes the condensation of carbamoyl phosphate and aspartate to form carbamoyl aspartate and inorganic phosphate, the committed step in the de novo pyrimidine nucleotide biosynthesis pathway. The polypeptide is Aspartate carbamoyltransferase catalytic subunit (Mycobacterium tuberculosis (strain ATCC 25177 / H37Ra)).